Here is a 312-residue protein sequence, read N- to C-terminus: DNA-directed RNA polymerase subunit alpha (312 aa).

The interval Met-1–Lys-227 is alpha N-terminal domain (alpha-NTD). Residues Pro-243–Asn-312 are alpha C-terminal domain (alpha-CTD).

This sequence belongs to the RNA polymerase alpha chain family. As to quaternary structure, in plastids the minimal PEP RNA polymerase catalytic core is composed of four subunits: alpha, beta, beta', and beta''. When a (nuclear-encoded) sigma factor is associated with the core the holoenzyme is formed, which can initiate transcription.

It is found in the plastid. Its subcellular location is the chloroplast. It catalyses the reaction RNA(n) + a ribonucleoside 5'-triphosphate = RNA(n+1) + diphosphate. Its function is as follows. DNA-dependent RNA polymerase catalyzes the transcription of DNA into RNA using the four ribonucleoside triphosphates as substrates. In Trieres chinensis (Marine centric diatom), this protein is DNA-directed RNA polymerase subunit alpha.